The primary structure comprises 764 residues: Sesterfisherol synthase (764 aa).

Residues 2-331 (EVWEHSRPIA…SPRHHAWRNN (330 aa)) form a terpene cyclase region. Aspartate 95 contributes to the Mg(2+) binding site. Substrate contacts are provided by residues aspartate 95, 187–190 (RRDD), asparagine 231, 235–239 (SFDRE), and 324–325 (RH). Positions 95 to 99 (DDGYE) match the DDXXD 1 motif. The NSE/DTE signature appears at 231 to 239 (NDYWSFDRE). Residues 332 to 759 (SRNGLKPANH…PMLRLLLEKL (428 aa)) are prenyltransferase. The segment at 347–372 (LITPSNNLNSSKGSEEQMQDSDNGTR) is disordered. Residues 348–358 (ITPSNNLNSSK) are compositionally biased toward polar residues. Lysine 476, arginine 479, and histidine 508 together coordinate isopentenyl diphosphate. Residues aspartate 515 and aspartate 519 each coordinate Mg(2+). A DDXXD 2 motif is present at residues 515–519 (DDIED). Arginine 524 is a binding site for dimethylallyl diphosphate. An isopentenyl diphosphate-binding site is contributed by arginine 525. Lysine 602, threonine 603, glutamine 638, asparagine 645, lysine 655, and lysine 665 together coordinate dimethylallyl diphosphate.

In the N-terminal section; belongs to the terpene synthase family. It in the C-terminal section; belongs to the FPP/GGPP synthase family. As to quaternary structure, hexamer. Requires Mg(2+) as cofactor.

The enzyme catalyses isopentenyl diphosphate + (2E,6E)-farnesyl diphosphate = (2E,6E,10E)-geranylgeranyl diphosphate + diphosphate. The catalysed reaction is isopentenyl diphosphate + (2E,6E,10E)-geranylgeranyl diphosphate = (2E,6E,10E,14E)-geranylfarnesyl diphosphate + diphosphate. It carries out the reaction (2E,6E,10E,14E)-geranylfarnesyl diphosphate + H2O = sesterfisherol + diphosphate. Its pathway is secondary metabolite biosynthesis; terpenoid biosynthesis. Its function is as follows. Bifunctional terpene synthase; part of the gene cluster that mediates the biosynthesis of sesterfisheric acid. The bifunctional terpene synthase NfSS converts dimethylallyl diphosphate (DMAPP) and isopentenyl diphosphate (IPP) into sesterfisherol. The C-terminal prenyltransferase (PT) domain of NfSS catalyzes formation of geranylfarnesyl pyrophosphate (GFPP), whereas the N-terminal terpene cyclase (TC) domain catalyzes the cyclization of GFPP to sesterfisherol. The cytochrome P450 monooxygenase NfP450 then catalyzes oxidative modifications of sesterfisherol into sesterfisheric acid. The protein is Sesterfisherol synthase of Neosartorya fischeri (strain ATCC 1020 / DSM 3700 / CBS 544.65 / FGSC A1164 / JCM 1740 / NRRL 181 / WB 181) (Aspergillus fischerianus).